A 258-amino-acid chain; its full sequence is Protein IMPACT homolog (258 aa).

Residues 10 to 114 (EELEAVEAIY…TELDGVLYVE (105 aa)) enclose the RWD domain. Lysine 187 is covalently cross-linked (Glycyl lysine isopeptide (Lys-Gly) (interchain with G-Cter in ubiquitin)).

Belongs to the IMPACT family. Interacts (via N-terminus) with GCN1 (via C-terminus); this interaction reduces the GCN1-GCN20 complex formation and prevents the interaction of GCN1 with GCN2 protein kinase and GCN2 activation in amino acid-starved cells. Interacts (via C-terminus) with ACT1; this interaction occurs in a GCN1-independent manner. Interacts with RPL39; this interaction occurs in a GCN1-independent manner. Associates (via middle region) with ribosomes; this association occurs in a GCN1-independent manner and persists under amino acid starvation conditions.

It localises to the cytoplasm. The protein localises to the nucleus. In terms of biological role, translational regulator that ensures constant high levels of translation under amino acid starvation. Plays a role as a negative regulator of the GCN2 kinase activity; impairs GCN1-mediated GCN2 activation, and hence GCN2-mediated eIF-2-alpha phosphorylation in amino acid-starved cells and subsequent down-regulation of protein synthesis. In normal conditions, it resides in a actin complex and has no activity. This chain is Protein IMPACT homolog (YIH1), found in Saccharomyces cerevisiae (strain ATCC 204508 / S288c) (Baker's yeast).